The sequence spans 191 residues: Holliday junction branch migration complex subunit RuvA (191 aa).

The segment at 1–64 (MIGSITGNVE…DNITQLYGFL (64 aa)) is domain I. Residues 65–142 (NRQEQDYFKM…KMPIEETFSI (78 aa)) are domain II. Residues 143 to 146 (IEND) form a flexible linker region. Residues 146–191 (DDSLAALISLGYEKLKAFNVIQEIKSKTPDASTQEVIRKALQKLSQ) are domain III.

This sequence belongs to the RuvA family. As to quaternary structure, homotetramer. Forms an RuvA(8)-RuvB(12)-Holliday junction (HJ) complex. HJ DNA is sandwiched between 2 RuvA tetramers; dsDNA enters through RuvA and exits via RuvB. An RuvB hexamer assembles on each DNA strand where it exits the tetramer. Each RuvB hexamer is contacted by two RuvA subunits (via domain III) on 2 adjacent RuvB subunits; this complex drives branch migration. In the full resolvosome a probable DNA-RuvA(4)-RuvB(12)-RuvC(2) complex forms which resolves the HJ.

It localises to the cytoplasm. The RuvA-RuvB-RuvC complex processes Holliday junction (HJ) DNA during genetic recombination and DNA repair, while the RuvA-RuvB complex plays an important role in the rescue of blocked DNA replication forks via replication fork reversal (RFR). RuvA specifically binds to HJ cruciform DNA, conferring on it an open structure. The RuvB hexamer acts as an ATP-dependent pump, pulling dsDNA into and through the RuvAB complex. HJ branch migration allows RuvC to scan DNA until it finds its consensus sequence, where it cleaves and resolves the cruciform DNA. The protein is Holliday junction branch migration complex subunit RuvA of Ehrlichia ruminantium (strain Gardel).